We begin with the raw amino-acid sequence, 653 residues long: ATP-dependent zinc metalloprotease FtsH 1 (653 aa).

The disordered stretch occupies residues 1 to 20 (MPENKNDKENKNDKENKNTK). At 1–30 (MPENKNDKENKNDKENKNTKEEKKKVKFSN) the chain is on the cytoplasmic side. The chain crosses the membrane as a helical span at residues 31–51 (IIWVYIIFAVFFIGALISLNW). Residues 52–126 (ENNPIISYSE…EYVESVGTKW (75 aa)) lie on the Periplasmic side of the membrane. Residues 127–147 (WFGLLINIIPIVVMVLFFFWL) traverse the membrane as a helical segment. At 148 to 653 (YRSASAGARS…VVNHVNYQPV (506 aa)) the chain is on the cytoplasmic side. 219 to 226 (GPPGTGKT) is a binding site for ATP. Histidine 441 provides a ligand contact to Zn(2+). Glutamate 442 is a catalytic residue. Zn(2+) contacts are provided by histidine 445 and aspartate 518.

The protein in the central section; belongs to the AAA ATPase family. It in the C-terminal section; belongs to the peptidase M41 family. In terms of assembly, homohexamer. Zn(2+) is required as a cofactor.

The protein localises to the cell inner membrane. Its function is as follows. Acts as a processive, ATP-dependent zinc metallopeptidase for both cytoplasmic and membrane proteins. Plays a role in the quality control of integral membrane proteins. The sequence is that of ATP-dependent zinc metalloprotease FtsH 1 from Petrotoga mobilis (strain DSM 10674 / SJ95).